Reading from the N-terminus, the 115-residue chain is Glycine cleavage system H-like protein (115 aa).

Residues 17–99 (VVRLGLTEKM…EGEGWLAVVR (83 aa)) form the Lipoyl-binding domain. Residue K58 is modified to N6-lipoyllysine.

The protein belongs to the GcvH family. Requires (R)-lipoate as cofactor.

The protein is Glycine cleavage system H-like protein of Chlamydia pneumoniae (Chlamydophila pneumoniae).